We begin with the raw amino-acid sequence, 130 residues long: Small ribosomal subunit protein uS9 (130 aa).

This sequence belongs to the universal ribosomal protein uS9 family.

The chain is Small ribosomal subunit protein uS9 from Mycoplasmoides gallisepticum (strain R(low / passage 15 / clone 2)) (Mycoplasma gallisepticum).